A 275-amino-acid polypeptide reads, in one-letter code: Adaptin ear-binding coat-associated protein 1 (275 aa).

The segment at Lys170–Pro191 is disordered. Position 180 is an omega-N-methylarginine (Arg180). Thr211 is modified (phosphothreonine). 2 short sequence motifs (WXXF motif) span residues Trp252 to Phe255 and Trp272 to Phe275. The segment at Asp254–Phe275 is disordered. Polar residues predominate over residues Ser256–Phe275.

It belongs to the NECAP family. In terms of assembly, interacts with AP1G1 and AP2A1 components of the adapter protein complexes AP-1 and AP-2. Interacts with the GAE domain proteins GGA1, GGA2 and GGA3.

It localises to the cytoplasmic vesicle. The protein localises to the clathrin-coated vesicle membrane. The protein resides in the cell membrane. Its function is as follows. Involved in endocytosis. The sequence is that of Adaptin ear-binding coat-associated protein 1 (NECAP1) from Homo sapiens (Human).